The chain runs to 212 residues: Thymidylate kinase (212 aa).

An ATP-binding site is contributed by 10–17 (GLEGAGKT).

This sequence belongs to the thymidylate kinase family.

It catalyses the reaction dTMP + ATP = dTDP + ADP. Phosphorylation of dTMP to form dTDP in both de novo and salvage pathways of dTTP synthesis. This is Thymidylate kinase from Serratia proteamaculans (strain 568).